We begin with the raw amino-acid sequence, 554 residues long: Condensin-2 complex subunit H2 (554 aa).

5 positions are modified to phosphoserine: S45, S178, S182, S199, and S200. Positions 154 to 296 (PVDVHPMPRS…GQKRKRKGAT (143 aa)) are disordered. A compositionally biased stretch (polar residues) spans 179-191 (RNGSPVSVRSISQ). The span at 201-210 (GDEDAEDVAE) shows a compositional bias: acidic residues. S441 bears the Phosphoserine mark.

It belongs to the CND2 H2 (condensin-2 subunit 2) family. Component of the condensin-2 complex, which contains the SMC2 and SMC4 heterodimer, and three non SMC subunits, NCAPG2, NCAPH2 and NCAPD3 that probably regulate the complex.

The protein localises to the nucleus. Functionally, regulatory subunit of the condensin-2 complex, a complex that seems to provide chromosomes with an additional level of organization and rigidity and in establishing mitotic chromosome architecture. May promote the resolution of double-strand DNA catenanes (intertwines) between sister chromatids. Condensin-mediated compaction likely increases tension in catenated sister chromatids, providing directionality for type II topoisomerase-mediated strand exchanges toward chromatid decatenation. Required for decatenation of chromatin bridges at anaphase. Early in neurogenesis, may play an essential role to ensure accurate mitotic chromosome condensation in neuron stem cells, ultimately affecting neuron pool and cortex size. Seems to have lineage-specific role in T-cell development. This Rattus norvegicus (Rat) protein is Condensin-2 complex subunit H2 (Ncaph2).